A 350-amino-acid chain; its full sequence is Putative transport protein YdbI (350 aa).

Helical transmembrane passes span 18 to 38 (IFVV…LILL), 67 to 87 (VVIT…GFVF), 145 to 165 (ISTF…FLFE), 207 to 227 (FIIA…MHFP), 229 to 249 (LFGL…GVVI), 257 to 277 (IAYS…IFAI), 289 to 309 (LMSA…IFSE), and 311 to 331 (FFGI…LDIL).

This sequence belongs to the autoinducer-2 exporter (AI-2E) (TC 2.A.86) family.

It localises to the cell membrane. The sequence is that of Putative transport protein YdbI (ydbI) from Bacillus subtilis (strain 168).